We begin with the raw amino-acid sequence, 116 residues long: Large ribosomal subunit protein bL19 (116 aa).

Belongs to the bacterial ribosomal protein bL19 family.

In terms of biological role, this protein is located at the 30S-50S ribosomal subunit interface and may play a role in the structure and function of the aminoacyl-tRNA binding site. The chain is Large ribosomal subunit protein bL19 from Magnetococcus marinus (strain ATCC BAA-1437 / JCM 17883 / MC-1).